The primary structure comprises 43 residues: Histone H3 (43 aa).

As to quaternary structure, the nucleosome is a histone octamer containing two molecules each of H2A, H2B, H3 and H4 assembled in one H3-H4 heterotetramer and two H2A-H2B heterodimers. The octamer wraps approximately 147 bp of DNA.

The protein localises to the nucleus. Its subcellular location is the chromosome. Functionally, core component of nucleosome. Nucleosomes wrap and compact DNA into chromatin, limiting DNA accessibility to the cellular machineries which require DNA as a template. Histones thereby play a central role in transcription regulation, DNA repair, DNA replication and chromosomal stability. DNA accessibility is regulated via a complex set of post-translational modifications of histones, also called histone code, and nucleosome remodeling. The protein is Histone H3 of Penaeus vannamei (Whiteleg shrimp).